We begin with the raw amino-acid sequence, 328 residues long: GTPase Obg (328 aa).

The region spanning 2–160 is the Obg domain; the sequence is YNFKDSVNIT…LSVRLELFLV (159 aa). The OBG-type G domain occupies 161–326; it reads ADIGLVGLPN…LIKEFFILAK (166 aa). Residues 167–174, 192–196, 213–216, 280–283, and 307–309 contribute to the GTP site; these read GLPNAGKS, FTTKI, DIPG, NKLD, and SIY. S174 and T194 together coordinate Mg(2+).

It belongs to the TRAFAC class OBG-HflX-like GTPase superfamily. OBG GTPase family. As to quaternary structure, monomer. Mg(2+) is required as a cofactor.

Its subcellular location is the cytoplasm. In terms of biological role, an essential GTPase which binds GTP, GDP and possibly (p)ppGpp with moderate affinity, with high nucleotide exchange rates and a fairly low GTP hydrolysis rate. Plays a role in control of the cell cycle, stress response, ribosome biogenesis and in those bacteria that undergo differentiation, in morphogenesis control. In Borreliella burgdorferi (strain ATCC 35210 / DSM 4680 / CIP 102532 / B31) (Borrelia burgdorferi), this protein is GTPase Obg.